Here is a 532-residue protein sequence, read N- to C-terminus: Cytochrome c oxidase subunit 1 (532 aa).

The next 3 membrane-spanning stretches (helical) occupy residues M1–A21, L27–V47, and G69–F89. H114 contributes to the heme b binding site. Transmembrane regions (helical) follow at residues T115–V135, L143–T163, L185–F205, I212–V232, G263–V283, L296–L316, L328–L348, and M366–I386. Cu cation-binding residues include H264, H314, and H315. Heme b-binding residues include H402 and H404. The next 3 membrane-spanning stretches (helical) occupy residues V403–T423, F442–M462, and V496–V516.

The protein belongs to the heme-copper respiratory oxidase family. It depends on Cu(2+) as a cofactor. Heme b is required as a cofactor.

The protein localises to the cell membrane. It carries out the reaction 4 Fe(II)-[cytochrome c] + O2 + 8 H(+)(in) = 4 Fe(III)-[cytochrome c] + 2 H2O + 4 H(+)(out). The protein operates within energy metabolism; oxidative phosphorylation. Its function is as follows. Cytochrome c oxidase is the component of the respiratory chain that catalyzes the reduction of oxygen to water. Subunits 1-3 form the functional core of the enzyme complex. Co I is the catalytic subunit of the enzyme. Electrons originating in cytochrome c are transferred via the copper A center of subunit 2 and heme a of subunit 1 to the bimetallic center formed by heme a3 and copper B. This cytochrome c oxidase shows proton pump activity across the membrane in addition to the electron transfer. This Rhodobacter capsulatus (Rhodopseudomonas capsulata) protein is Cytochrome c oxidase subunit 1 (ctaD).